Consider the following 174-residue polypeptide: Adenylate kinase (174 aa).

An NMP region spans residues 12-41; sequence STGDMLRAAIKAGTLLGLEAKKIIDEGGLV. AMP contacts are provided by residues T13, R18, 39-41, 67-70, and Q74; these read GLV and GFPR. An LID region spans residues 104-141; the sequence is GRRVHLASGRTYHVTYNPPKVEGKDDVTGEDLIQRDDD. ATP-binding positions include R105 and 114–115; that span reads TY. Residues R138 and R149 each contribute to the AMP site.

Belongs to the adenylate kinase family. As to quaternary structure, monomer.

The protein resides in the cytoplasm. It catalyses the reaction AMP + ATP = 2 ADP. The protein operates within purine metabolism; AMP biosynthesis via salvage pathway; AMP from ADP: step 1/1. Its function is as follows. Catalyzes the reversible transfer of the terminal phosphate group between ATP and AMP. Plays an important role in cellular energy homeostasis and in adenine nucleotide metabolism. This is Adenylate kinase from Neisseria polysaccharea.